Reading from the N-terminus, the 63-residue chain is Metallothionein-2 (63 aa).

Belongs to the metallothionein superfamily. Type 6 family.

This protein binds cations of several transition elements. The polypeptide is Metallothionein-2 (mtl-2) (Caenorhabditis elegans).